Here is a 445-residue protein sequence, read N- to C-terminus: Tubulin beta-2 chain (445 aa).

GTP contacts are provided by Q12, E73, S142, G146, T147, G148, N208, and N230. E73 serves as a coordination point for Mg(2+).

Belongs to the tubulin family. As to quaternary structure, dimer of alpha and beta chains. A typical microtubule is a hollow water-filled tube with an outer diameter of 25 nm and an inner diameter of 15 nM. Alpha-beta heterodimers associate head-to-tail to form protofilaments running lengthwise along the microtubule wall with the beta-tubulin subunit facing the microtubule plus end conferring a structural polarity. Microtubules usually have 13 protofilaments but different protofilament numbers can be found in some organisms and specialized cells. Mg(2+) serves as cofactor.

The protein localises to the cytoplasm. Its subcellular location is the cytoskeleton. Functionally, tubulin is the major constituent of microtubules, a cylinder consisting of laterally associated linear protofilaments composed of alpha- and beta-tubulin heterodimers. Microtubules grow by the addition of GTP-tubulin dimers to the microtubule end, where a stabilizing cap forms. Below the cap, tubulin dimers are in GDP-bound state, owing to GTPase activity of alpha-tubulin. This chain is Tubulin beta-2 chain (TUBB2), found in Suillus bovinus (Jersey cow bolete).